The primary structure comprises 476 residues: Serine/threonine-protein kinase Chk1 (476 aa).

Positions tryptophan 9–tyrosine 265 constitute a Protein kinase domain. Residues leucine 15–valine 23 and lysine 38 each bind ATP. The active-site Proton acceptor is the aspartate 130. The segment at glycine 272–aspartate 329 is disordered. Phosphoserine; by PKB/AKT1 is present on serine 280. Serine 296 bears the Phosphoserine mark. At serine 317 the chain carries Phosphoserine; by ATM and ATR. Serine 345 is modified (phosphoserine). An autoinhibitory region region spans residues arginine 391–proline 476.

The protein belongs to the protein kinase superfamily. CAMK Ser/Thr protein kinase family. NIM1 subfamily. Post-translationally, phosphorylated by ATR in a RAD17-dependent manner in response to ultraviolet irradiation and inhibition of DNA replication. Phosphorylated by ATM in response to ionizing irradiation. Phosphorylation at Ser-345 induces a change in the conformation of the protein and activates the kinase activity. Phosphorylation at Ser-345 also increases binding to 14-3-3 proteins and promotes nuclear retention.

It is found in the nucleus. The protein resides in the chromosome. It localises to the cytoplasm. Its subcellular location is the cytoskeleton. The protein localises to the microtubule organizing center. It is found in the centrosome. It catalyses the reaction L-seryl-[protein] + ATP = O-phospho-L-seryl-[protein] + ADP + H(+). The catalysed reaction is L-threonyl-[protein] + ATP = O-phospho-L-threonyl-[protein] + ADP + H(+). With respect to regulation, activated through phosphorylation by atr or atm in response to DNA damage or inhibition of DNA replication. In terms of biological role, serine/threonine-protein kinase which is required for checkpoint-mediated cell cycle arrest and activation of DNA repair in response to the presence of DNA damage or unreplicated DNA. May also negatively regulate cell cycle progression during unperturbed cell cycles. This regulation is achieved by a number of mechanisms that together help to preserve the integrity of the genome. Recognizes the substrate consensus sequence [R-X-X-S/T]. Binds to and phosphorylates CDC25A, CDC25B and CDC25C. This inhibits their activity through proteasomal degradation, nucleo-cytoplasmic shuttling and inhibition by proteins of the 13-3-3 family. Inhibition of CDC25 leads to increased inhibitory tyrosine phosphorylation of CDK-cyclin complexes and blocks cell cycle progression. May promote DNA repair, regulate chromatin assembly and the transcription of genes that regulate cell-cycle progression. May also play a role in replication fork maintenance. The protein is Serine/threonine-protein kinase Chk1 (CHEK1) of Gallus gallus (Chicken).